The following is a 206-amino-acid chain: Large ribosomal subunit protein uL4 (206 aa).

The segment at 46–77 is disordered; it reads GTRAQKDREQVRHSTKKPFKQKGTGNARAGMT.

The protein belongs to the universal ribosomal protein uL4 family. In terms of assembly, part of the 50S ribosomal subunit.

In terms of biological role, one of the primary rRNA binding proteins, this protein initially binds near the 5'-end of the 23S rRNA. It is important during the early stages of 50S assembly. It makes multiple contacts with different domains of the 23S rRNA in the assembled 50S subunit and ribosome. Functionally, forms part of the polypeptide exit tunnel. In Paracidovorax citrulli (strain AAC00-1) (Acidovorax citrulli), this protein is Large ribosomal subunit protein uL4.